The sequence spans 520 residues: Ribonuclease Y (520 aa).

Residues 1-21 (MDIITIIIAVIAGIGGGFGIS) traverse the membrane as a helical segment. The 67-residue stretch at 210–276 (CVSVFNIESD…RLALHKLVTD (67 aa)) folds into the KH domain. The 94-residue stretch at 336–429 (LLQHSREVSK…VQVCDAISGA (94 aa)) folds into the HD domain.

It belongs to the RNase Y family.

The protein localises to the cell membrane. Endoribonuclease that initiates mRNA decay. The protein is Ribonuclease Y of Flavobacterium psychrophilum (strain ATCC 49511 / DSM 21280 / CIP 103535 / JIP02/86).